Consider the following 164-residue polypeptide: Phosphopantetheine adenylyltransferase (164 aa).

Ser9 contributes to the substrate binding site. ATP contacts are provided by residues 9-10 and His17; that span reads SF. Substrate is bound by residues Lys41, Leu73, and Lys87. ATP is bound by residues 88–90, Glu98, and 123–129; these read GLR and YSYISSS.

The protein belongs to the bacterial CoaD family. As to quaternary structure, homohexamer. The cofactor is Mg(2+).

It localises to the cytoplasm. The catalysed reaction is (R)-4'-phosphopantetheine + ATP + H(+) = 3'-dephospho-CoA + diphosphate. The protein operates within cofactor biosynthesis; coenzyme A biosynthesis; CoA from (R)-pantothenate: step 4/5. Reversibly transfers an adenylyl group from ATP to 4'-phosphopantetheine, yielding dephospho-CoA (dPCoA) and pyrophosphate. This is Phosphopantetheine adenylyltransferase from Clostridium perfringens (strain ATCC 13124 / DSM 756 / JCM 1290 / NCIMB 6125 / NCTC 8237 / Type A).